Consider the following 85-residue polypeptide: Antitoxin VapB31 (85 aa).

Its function is as follows. Antitoxin component of a type II toxin-antitoxin (TA) system. Upon expression in M.smegmatis neutralizes the effect of cognate toxin VapC31. The polypeptide is Antitoxin VapB31 (vapB31) (Mycobacterium tuberculosis (strain ATCC 25618 / H37Rv)).